Consider the following 181-residue polypeptide: Oligoribonuclease (181 aa).

An Exonuclease domain is found at 8 to 171 (LIWLDLEMTG…DDIKESIAEL (164 aa)). Tyr129 is a catalytic residue.

This sequence belongs to the oligoribonuclease family.

Its subcellular location is the cytoplasm. In terms of biological role, 3'-to-5' exoribonuclease specific for small oligoribonucleotides. The chain is Oligoribonuclease from Colwellia psychrerythraea (strain 34H / ATCC BAA-681) (Vibrio psychroerythus).